Reading from the N-terminus, the 72-residue chain is Translation initiation factor IF-1 (72 aa).

The 72-residue stretch at 1–72 (MAKQDVIELE…TRGRITYRYK (72 aa)) folds into the S1-like domain.

It belongs to the IF-1 family. In terms of assembly, component of the 30S ribosomal translation pre-initiation complex which assembles on the 30S ribosome in the order IF-2 and IF-3, IF-1 and N-formylmethionyl-tRNA(fMet); mRNA recruitment can occur at any time during PIC assembly.

The protein resides in the cytoplasm. Functionally, one of the essential components for the initiation of protein synthesis. Stabilizes the binding of IF-2 and IF-3 on the 30S subunit to which N-formylmethionyl-tRNA(fMet) subsequently binds. Helps modulate mRNA selection, yielding the 30S pre-initiation complex (PIC). Upon addition of the 50S ribosomal subunit IF-1, IF-2 and IF-3 are released leaving the mature 70S translation initiation complex. This chain is Translation initiation factor IF-1, found in Staphylococcus aureus (strain USA300 / TCH1516).